The sequence spans 1260 residues: Kinesin-like protein KIN-14E (1260 aa).

Residues 115-274 (FQKDPIPTSL…PGREEIEALL (160 aa)) enclose the MyTH4 domain. An FERM domain is found at 279–593 (LTTIVFFLDE…HINDVMLRRY (315 aa)). 2 coiled-coil regions span residues 615–676 (QNFE…LLEV) and 753–853 (SKRL…TAAI). The region spanning 888 to 1209 (KIRVYCRIRP…LLYASRVRTI (322 aa)) is the Kinesin motor domain. 972–977 (GSGKTF) serves as a coordination point for ATP. The interval 1217 to 1239 (ISSKEMVRLKKLVAYWKEQAGKK) is calmodulin-binding. The interval 1221 to 1260 (EMVRLKKLVAYWKEQAGKKGEEEDLVDIEEDRTRKDEADS) is homodimerization domain. Positions 1236 to 1260 (AGKKGEEEDLVDIEEDRTRKDEADS) are disordered. The segment covering 1251–1260 (DRTRKDEADS) has biased composition (basic and acidic residues).

This sequence belongs to the TRAFAC class myosin-kinesin ATPase superfamily. Kinesin family. KIN-14 subfamily. Homodimer (via C-terminus). Binds microtubules via its N-terminus containing the MyTH4 domain and binds F-actin via its FERM domain. Interacts with KIPK1. Interacts with KIPK2. Interacts with AN. Interacts with AIR9. Interacts (via C-terminus) with KIC, CAM2, CAM4 and CAM6. KIC and calmodulin show competitive binding to KCBP. Binding to calmodulin inhibits microtubule binding activity. Binding to KIC inhibits microtubule binding activity and microtubule-stimulated ATPase activity. Widely expressed with the highest levels in flowers. Strongly expressed in the root tip. Highly detected in the branch apex of the trichome.

Its subcellular location is the cytoplasm. The protein resides in the cell cortex. It is found in the cytoskeleton. The protein localises to the spindle. It localises to the phragmoplast. Functionally, minus-end microtubule-dependent motor protein involved in the regulation of cell division and trichome morphogenesis through microtubules bundling. Possesses basal and microtubule-stimulated ATPase activities. Acts as a hub that brings together microtubules and actin filaments to modulate the cytoskeleton during trichome formation and morphogenesis. Could be involved in the negative regulation of root growth. The sequence is that of Kinesin-like protein KIN-14E from Arabidopsis thaliana (Mouse-ear cress).